A 310-amino-acid chain; its full sequence is Translocator protein BipD (310 aa).

Coiled coils occupy residues 127–171 (DPIL…LQDY) and 250–299 (DTAR…AIST).

The protein belongs to the invasin protein D family.

It localises to the secreted. Its function is as follows. Required for invasion of epithelial cells, as well as for survival within host cells, escape from endocytic vesicles and subsequent actin-tail formation. Probably regulates the secretion of effectors BipB and BipC and their final integration into the target cell membrane. In Burkholderia mallei (strain NCTC 10247), this protein is Translocator protein BipD (bipD).